Consider the following 37-residue polypeptide: Large ribosomal subunit protein bL12 (37 aa).

Belongs to the bacterial ribosomal protein bL12 family. Homodimer. Part of the ribosomal stalk of the 50S ribosomal subunit. Forms a multimeric L10(L12)X complex, where L10 forms an elongated spine to which 2 to 4 L12 dimers bind in a sequential fashion. Binds GTP-bound translation factors.

Forms part of the ribosomal stalk which helps the ribosome interact with GTP-bound translation factors. Is thus essential for accurate translation. This Clostridium pasteurianum protein is Large ribosomal subunit protein bL12 (rplL).